Here is a 256-residue protein sequence, read N- to C-terminus: Matrix protein (256 aa).

Residues M1–C110 are interaction with M2-1. The nuclear targeting and binding to host importin KPNB1 stretch occupies residues C110 to T183. Residues I194–V206 carry the Nuclear export signal motif. T205 carries the phosphothreonine; by host CK2 modification.

Belongs to the pneumovirinae M protein family. In terms of assembly, forms dimers. Forms higher-order oligomers. Interacts with glycoprotein G (via N-terminus). Interacts with protein M2-1; this interaction directs the matrix protein localization to cytoplasmic inclusions comprising viral proteins L, N, P, and M2-1 and mediates the matrix protein association with the nucleocapsid. Interacts with host importin KPNB1; this interaction mediates nuclear import of the matrix protein early during infection. Interacts with host AP3M1; this interaction plays an essential role in trafficking the matrix protein in host cells. Interacts with host CAV1; this interaction probably facilitates viral budding. Interacts with host CFL1; this interaction probably facilitates viral replication. Interacts with host ZNF502; this interaction probably facilitates viral release. Interacts with host RACK1. Phosphorylation is important for oligomerization.

It is found in the virion. It localises to the host cytoplasm. Its subcellular location is the host nucleus. The protein resides in the host cell membrane. Plays a crucial role in virus assembly into filaments and budding. Early in infection, localizes in the nucleus where it inhibits host cell transcription through direct binding to host chromatin. Later in infection, traffics to the cytoplasm through the action of host CRM1 to associate with inclusion bodies, the site of viral transcription and replication. During virus assembly and budding, acts as a bridge between the nucleocapsid and the lipid bilayer. Also plays a role in the inhibition of host interferon-beta response in a RACK1-dependent manner. This Homo sapiens (Human) protein is Matrix protein (M).